A 220-amino-acid chain; its full sequence is MKRSASDSPLLFDLPLAPDFSQEQQLMKRGLKHIAGIDEAGRGPLAGPVVAAAVVLDQNDLPEGLDDSKRLTAARREALYEIILTKAITVSVASLSARSIDASDIRKAALEAMRRAVIGLTLKPCHALVDGRDVPPGLSCPGSALVKGDQRSVSIAAASIVAKVTRDRMMIRAGAAHPPYGLEIHAGYATQKHRAAIESEGPVPGLHRYTFAPIKGRFDC.

The RNase H type-2 domain maps to 32 to 220 (KHIAGIDEAG…FAPIKGRFDC (189 aa)). The a divalent metal cation site is built by aspartate 38, glutamate 39, and aspartate 130.

The protein belongs to the RNase HII family. It depends on Mn(2+) as a cofactor. Mg(2+) is required as a cofactor.

It localises to the cytoplasm. It catalyses the reaction Endonucleolytic cleavage to 5'-phosphomonoester.. In terms of biological role, endonuclease that specifically degrades the RNA of RNA-DNA hybrids. This Brucella ovis (strain ATCC 25840 / 63/290 / NCTC 10512) protein is Ribonuclease HII.